A 359-amino-acid polypeptide reads, in one-letter code: DNA polymerase IV (359 aa).

Residues 4 to 185 enclose the UmuC domain; it reads IIHIDMDCYF…LSLRKIPGVG (182 aa). Residues Asp8 and Asp103 each coordinate Mg(2+). The active site involves Glu104.

Belongs to the DNA polymerase type-Y family. Monomer. Mg(2+) serves as cofactor.

The protein localises to the cytoplasm. It catalyses the reaction DNA(n) + a 2'-deoxyribonucleoside 5'-triphosphate = DNA(n+1) + diphosphate. Poorly processive, error-prone DNA polymerase involved in untargeted mutagenesis. Copies undamaged DNA at stalled replication forks, which arise in vivo from mismatched or misaligned primer ends. These misaligned primers can be extended by PolIV. Exhibits no 3'-5' exonuclease (proofreading) activity. May be involved in translesional synthesis, in conjunction with the beta clamp from PolIII. The chain is DNA polymerase IV from Shewanella sp. (strain ANA-3).